Consider the following 88-residue polypeptide: Protein U62 (88 aa).

The sequence is that of Protein U62 from Elephantid herpesvirus 1 (isolate Asian elephant/Berlin/Kiba/1998) (EIHV-1).